Here is a 142-residue protein sequence, read N- to C-terminus: Nucleoside diphosphate kinase (142 aa).

Residues K9, F57, R85, T91, R102, and N112 each contribute to the ATP site. Residue H115 is the Pros-phosphohistidine intermediate of the active site.

Belongs to the NDK family. Homotetramer. Mg(2+) is required as a cofactor.

It localises to the cytoplasm. It carries out the reaction a 2'-deoxyribonucleoside 5'-diphosphate + ATP = a 2'-deoxyribonucleoside 5'-triphosphate + ADP. The catalysed reaction is a ribonucleoside 5'-diphosphate + ATP = a ribonucleoside 5'-triphosphate + ADP. In terms of biological role, major role in the synthesis of nucleoside triphosphates other than ATP. The ATP gamma phosphate is transferred to the NDP beta phosphate via a ping-pong mechanism, using a phosphorylated active-site intermediate. This is Nucleoside diphosphate kinase from Dehalococcoides mccartyi (strain CBDB1).